Consider the following 390-residue polypeptide: MALKLCFPPHKMPSFPDARIRSHRVFMASTIHSPSMEVGKVKKPFTPPREVHVQVTHSLAPEKREIFNSLNNWAQENILVLLKDVDKCWQPSDFLPDSASEGFDEQVMELRKRCKEIPDDYFIVLVGDMITEEALPTYQTMLNTLDGVRDETGASLTPWAIWTRAWTAEENRHGDLLNKYLYLSGRVDMKQIEKTIQYLIGSGMDPRTENNPYLGFIYTSFQERATFISHGNTARLAKEHGDLKLAQICGIIAADEKRHETAYTKIVEKLFEIDPDGTVLALADMMRKKVSMPAHLMYDGQDDNLFENFSSVAQRLGVYTAKDYADILEFLVGRWDIEKLTGLSGEGRKAQDYVCTLPPRIRRLEERAQSRVKKASATPFSWIFGREINL.

The N-terminal 27 residues, 1–27 (MALKLCFPPHKMPSFPDARIRSHRVFM), are a transit peptide targeting the chloroplast. Glu132, Glu170, His173, Glu223, Glu256, and His259 together coordinate Fe cation.

Belongs to the fatty acid desaturase type 2 family. In terms of assembly, homodimer. Requires Fe(2+) as cofactor.

The protein localises to the plastid. It localises to the chloroplast. It catalyses the reaction octadecanoyl-[ACP] + 2 reduced [2Fe-2S]-[ferredoxin] + O2 + 2 H(+) = (9Z)-octadecenoyl-[ACP] + 2 oxidized [2Fe-2S]-[ferredoxin] + 2 H2O. It participates in lipid metabolism; fatty acid metabolism. Its function is as follows. Converts stearoyl-ACP to oleoyl-ACP by introduction of a cis double bond between carbons 9 and 10 of the acyl chain. The sequence is that of Stearoyl-[acyl-carrier-protein] 9-desaturase, chloroplastic from Olea europaea (Common olive).